A 307-amino-acid chain; its full sequence is tRNA dimethylallyltransferase (307 aa).

10 to 17 (GPTAVGKT) contacts ATP. 12 to 17 (TAVGKT) is a substrate binding site. An interaction with substrate tRNA region spans residues 35–38 (DSMQ).

Belongs to the IPP transferase family. In terms of assembly, monomer. Requires Mg(2+) as cofactor.

It carries out the reaction adenosine(37) in tRNA + dimethylallyl diphosphate = N(6)-dimethylallyladenosine(37) in tRNA + diphosphate. Catalyzes the transfer of a dimethylallyl group onto the adenine at position 37 in tRNAs that read codons beginning with uridine, leading to the formation of N6-(dimethylallyl)adenosine (i(6)A). In Ligilactobacillus salivarius (strain UCC118) (Lactobacillus salivarius), this protein is tRNA dimethylallyltransferase.